A 228-amino-acid polypeptide reads, in one-letter code: Cytidylate kinase (228 aa).

Residue 11–19 (GPAGTGKSS) participates in ATP binding.

Belongs to the cytidylate kinase family. Type 1 subfamily.

The protein resides in the cytoplasm. The catalysed reaction is CMP + ATP = CDP + ADP. It carries out the reaction dCMP + ATP = dCDP + ADP. This chain is Cytidylate kinase, found in Mycobacterium avium (strain 104).